The sequence spans 182 residues: Peptidyl-prolyl cis-trans isomerase ssp-1 (182 aa).

Positions 7 to 41 (TGLPEDWEVRHSQSKNLPYYFNSATKTSRWEPPSG) constitute a WW domain. The 112-residue stretch at 71-182 (QGKIRCAHLL…SGLHLIERLE (112 aa)) folds into the PpiC domain.

It catalyses the reaction [protein]-peptidylproline (omega=180) = [protein]-peptidylproline (omega=0). Its function is as follows. Site-specific PPIase with respect to the amino acid N-terminal to the proline residue. Peptides with glutamate, phosphoserine, or phosphothreonine in the -1 position are the best substrates. It is not only able to isomerize small peptides but is also active in protein folding. This is Peptidyl-prolyl cis-trans isomerase ssp-1 (ssp-1) from Neurospora crassa (strain ATCC 24698 / 74-OR23-1A / CBS 708.71 / DSM 1257 / FGSC 987).